We begin with the raw amino-acid sequence, 21 residues long: Formate ester dehydrogenase beta chain (21 aa).

In terms of assembly, heterotrimer composed of an alpha, a beta and a gamma chain.

The chain is Formate ester dehydrogenase beta chain from Amycolatopsis methanolica.